The following is a 192-amino-acid chain: MAVVKSSEIEKGSFLLIKGAPHIVLEREFSKTGRGGAIVRLKLKNLKNKFVIRETLKGADTAEAIEIYEVSAQYLYKDKDVLVFMDLETYDQVSLDLKESANLQDKVPFLQESEIYSLVTFDNVVIDIKLAPKIAFEVVEVEAAVKGDTVTNAMKNITLNTGLVVKAPLFINVGDKVLINSETKEYAERIKN.

Belongs to the elongation factor P family.

The protein resides in the cytoplasm. Its pathway is protein biosynthesis; polypeptide chain elongation. Its function is as follows. Involved in peptide bond synthesis. Stimulates efficient translation and peptide-bond synthesis on native or reconstituted 70S ribosomes in vitro. Probably functions indirectly by altering the affinity of the ribosome for aminoacyl-tRNA, thus increasing their reactivity as acceptors for peptidyl transferase. The polypeptide is Elongation factor P (efp) (Borreliella burgdorferi (strain ATCC 35210 / DSM 4680 / CIP 102532 / B31) (Borrelia burgdorferi)).